The following is a 618-amino-acid chain: Crinkler effector protein 16 (618 aa).

The first 19 residues, 1-19, serve as a signal peptide directing secretion; it reads MVVVSLQCAIVGQAGSSFD. The segment at 18-57 is LQLFLAK domain; that stretch reads FDVEIDDGAKVSKLKDAIKAKKPNDFKVVDADKLHLFLAK. A DWL domain region spans residues 58–139; sequence QPVEDESGKE…NMELPSSEQI (82 aa). Residues 140-146 carry the HVLVXXP motif motif; sequence HVLVVVP. A glycan (N-linked (GlcNAc...) asparagine) is linked at Asn-534.

It belongs to the Crinkler effector family.

It is found in the secreted. The protein localises to the host nucleus. Functionally, secreted effector that elicits necrosis in host plants, a characteristic of plant innate immunity. The sequence is that of Crinkler effector protein 16 from Phytophthora infestans (Potato late blight agent).